We begin with the raw amino-acid sequence, 588 residues long: Proteasome-associated ATPase (588 aa).

Over residues methionine 1–arginine 10 the composition is skewed to basic and acidic residues. Residues methionine 1 to glycine 23 are disordered. Residues arginine 47–proline 94 adopt a coiled-coil conformation. ATP is bound at residue glycine 276–leucine 281. A docks into pockets in the proteasome alpha-ring region spans residues tyrosine 587–leucine 588.

The protein belongs to the AAA ATPase family. Homohexamer. Assembles into a hexameric ring structure that caps the 20S proteasome core. Strongly interacts with the prokaryotic ubiquitin-like protein Pup through a hydrophobic interface; the interacting region of ARC lies in its N-terminal coiled-coil domain. There is one Pup binding site per ARC hexamer ring. Upon ATP-binding, the C-terminus of ARC interacts with the alpha-rings of the proteasome core, possibly by binding to the intersubunit pockets.

It participates in protein degradation; proteasomal Pup-dependent pathway. Functionally, ATPase which is responsible for recognizing, binding, unfolding and translocation of pupylated proteins into the bacterial 20S proteasome core particle. May be essential for opening the gate of the 20S proteasome via an interaction with its C-terminus, thereby allowing substrate entry and access to the site of proteolysis. Thus, the C-termini of the proteasomal ATPase may function like a 'key in a lock' to induce gate opening and therefore regulate proteolysis. In Streptomyces coelicolor (strain ATCC BAA-471 / A3(2) / M145), this protein is Proteasome-associated ATPase.